A 341-amino-acid chain; its full sequence is Brain-specific homeobox/POU domain protein 3 (341 aa).

Positions R55 to I65 match the POU-IV box motif. The POU-specific domain maps to E182–E259. The homeobox DNA-binding region spans K277 to K336.

The protein belongs to the POU transcription factor family. Class-4 subfamily.

The protein resides in the nucleus. May play a role in specifying terminally differentiated neuronal phenotypes. This Gallus gallus (Chicken) protein is Brain-specific homeobox/POU domain protein 3 (BRN3).